Here is a 450-residue protein sequence, read N- to C-terminus: Asparagine--tRNA ligase (450 aa).

Belongs to the class-II aminoacyl-tRNA synthetase family. As to quaternary structure, homodimer.

The protein resides in the cytoplasm. The enzyme catalyses tRNA(Asn) + L-asparagine + ATP = L-asparaginyl-tRNA(Asn) + AMP + diphosphate + H(+). The polypeptide is Asparagine--tRNA ligase (Mycoplasmopsis pulmonis (strain UAB CTIP) (Mycoplasma pulmonis)).